We begin with the raw amino-acid sequence, 264 residues long: METDKRWSLAGKTALVTGGTRGIGRAVVEELAKFGAKVHTCSRNQEELNACLNDWKANGLVVSGSVCDASVRDQREKLIQEASSAFSGKLNILINNVGTNVRKPTVEYSSEEYAKIMSTNLESAFHLSQIAHPLLKASGVGSIVFISSVAGLVHLSSGSIYGATKGALNQLTRNLACEWASDNIRTNCVAPWYIKTSLVETLLEKKEFVEAVVSRTPLGRVGEPEEVSSLVAFLCLPASSYITGQVISVDGGFTVNGFSYAMKP.

An NADP(+)-binding site is contributed by 15-39 (LVTGGTRGIGRAVVEELAKFGAKVH). Substrate is bound at residue S148. Residue Y161 is the Proton acceptor of the active site.

Belongs to the short-chain dehydrogenases/reductases (SDR) family. SDR65C subfamily.

In Arabidopsis thaliana (Mouse-ear cress), this protein is Tropinone reductase homolog At5g06060.